The sequence spans 268 residues: Shikimate dehydrogenase (NADP(+)) (268 aa).

Shikimate is bound by residues 13–15 (SLS) and threonine 60. Lysine 64 (proton acceptor) is an active-site residue. Residue glutamate 76 participates in NADP(+) binding. Positions 85 and 100 each coordinate shikimate. Residues 124-128 (GAGGA), 148-153 (NRTMAR), and isoleucine 209 contribute to the NADP(+) site. Tyrosine 211 lines the shikimate pocket. Position 232 (glycine 232) interacts with NADP(+).

This sequence belongs to the shikimate dehydrogenase family. As to quaternary structure, homodimer.

It catalyses the reaction shikimate + NADP(+) = 3-dehydroshikimate + NADPH + H(+). It functions in the pathway metabolic intermediate biosynthesis; chorismate biosynthesis; chorismate from D-erythrose 4-phosphate and phosphoenolpyruvate: step 4/7. In terms of biological role, involved in the biosynthesis of the chorismate, which leads to the biosynthesis of aromatic amino acids. Catalyzes the reversible NADPH linked reduction of 3-dehydroshikimate (DHSA) to yield shikimate (SA). The sequence is that of Shikimate dehydrogenase (NADP(+)) from Staphylococcus aureus (strain MRSA252).